We begin with the raw amino-acid sequence, 137 residues long: Flagellar basal body rod protein FlgB (137 aa).

Belongs to the flagella basal body rod proteins family. As to quaternary structure, the basal body constitutes a major portion of the flagellar organelle and consists of a number of rings mounted on a central rod. In Gram-negative bacteria, at least four rings, L, P, S and M are present, whereas Gram-positive bacteria lack the L and P rings. The rod consists of about 26 subunits of FlgG in the distal portion, and FlgB, FlgC and FlgF build up the proximal portion of the rod with about 6 subunits each. Rod assembly occurs by export via the flagellum-specific pathway of its constituent proteins and by their incorporation into the rod structure in the probable order of FlgB, FlgC, FlgF and FlgG. Another protein, FliE, also assembles onto the stable rod structure.

It localises to the bacterial flagellum basal body. Structural component of flagellum, the bacterial motility apparatus. Part of the rod structure of flagellar basal body. The protein is Flagellar basal body rod protein FlgB of Proteus mirabilis (strain HI4320).